The chain runs to 631 residues: Glutamyl-tRNA(Gln) amidotransferase subunit E (631 aa).

This sequence belongs to the GatB/GatE family. GatE subfamily. Heterodimer of GatD and GatE.

The catalysed reaction is L-glutamyl-tRNA(Gln) + L-glutamine + ATP + H2O = L-glutaminyl-tRNA(Gln) + L-glutamate + ADP + phosphate + H(+). In terms of biological role, allows the formation of correctly charged Gln-tRNA(Gln) through the transamidation of misacylated Glu-tRNA(Gln) in organisms which lack glutaminyl-tRNA synthetase. The reaction takes place in the presence of glutamine and ATP through an activated gamma-phospho-Glu-tRNA(Gln). The GatDE system is specific for glutamate and does not act on aspartate. The chain is Glutamyl-tRNA(Gln) amidotransferase subunit E from Methanococcus maripaludis (strain C7 / ATCC BAA-1331).